The chain runs to 331 residues: Elongation factor Ts, mitochondrial (331 aa).

A mitochondrion-targeting transit peptide spans 1–14 (MIVSRQVIRSVVRK).

The protein belongs to the EF-Ts family.

The protein localises to the mitochondrion. Associates with the EF-Tu.GDP complex and induces the exchange of GDP to GTP. It remains bound to the aminoacyl-tRNA.EF-Tu.GTP complex up to the GTP hydrolysis stage on the ribosome. In Brugia malayi (Filarial nematode worm), this protein is Elongation factor Ts, mitochondrial.